The following is a 182-amino-acid chain: Adenylate kinase (182 aa).

Residue 12–17 (GAGKGT) coordinates ATP. Residues 32 to 61 (STGDLLREEVSGGTDLGKKAELIMNKGELV) are NMP. AMP-binding positions include threonine 33, arginine 38, 59–61 (ELV), 85–88 (GFPR), and glutamine 92. The interval 126-132 (GRGRKDD) is LID. Residue arginine 127 participates in ATP binding. AMP contacts are provided by arginine 129 and arginine 140. Residue glycine 168 participates in ATP binding.

The protein belongs to the adenylate kinase family. In terms of assembly, monomer.

It localises to the cytoplasm. It catalyses the reaction AMP + ATP = 2 ADP. It participates in purine metabolism; AMP biosynthesis via salvage pathway; AMP from ADP: step 1/1. Its function is as follows. Catalyzes the reversible transfer of the terminal phosphate group between ATP and AMP. Plays an important role in cellular energy homeostasis and in adenine nucleotide metabolism. This chain is Adenylate kinase, found in Prochlorococcus marinus (strain SARG / CCMP1375 / SS120).